The sequence spans 305 residues: Glycine--tRNA ligase alpha subunit (305 aa).

The protein belongs to the class-II aminoacyl-tRNA synthetase family. As to quaternary structure, tetramer of two alpha and two beta subunits.

It localises to the cytoplasm. It carries out the reaction tRNA(Gly) + glycine + ATP = glycyl-tRNA(Gly) + AMP + diphosphate. The chain is Glycine--tRNA ligase alpha subunit from Streptococcus pneumoniae (strain CGSP14).